The sequence spans 126 residues: Protein ApaG (126 aa).

The 125-residue stretch at 2–126 (DVSQPRIQIQ…FRLAVPNILN (125 aa)) folds into the ApaG domain.

The sequence is that of Protein ApaG from Vibrio vulnificus (strain CMCP6).